The chain runs to 144 residues: Phosphomevalonate dehydratase small subunit (144 aa).

The Proton acceptor role is filled by Ser-65.

It belongs to the AcnX type II small subunit family. In terms of assembly, heterodimer composed of a large subunit (PMDh-L) and a small subunit (PMDh-S).

The enzyme catalyses (R)-5-phosphomevalonate = (2E)-3-methyl-5-phosphooxypent-2-enoate + H2O. The protein operates within isoprenoid biosynthesis; isopentenyl diphosphate biosynthesis via mevalonate pathway. Component of a hydro-lyase that catalyzes the dehydration of mevalonate 5-phosphate (MVA5P) to form trans-anhydromevalonate 5-phosphate (tAHMP). Involved in the archaeal mevalonate (MVA) pathway, which provides fundamental precursors for isoprenoid biosynthesis, such as isopentenyl diphosphate (IPP) and dimethylallyl diphosphate (DMAPP). The polypeptide is Phosphomevalonate dehydratase small subunit (Methanosarcina mazei (strain ATCC BAA-159 / DSM 3647 / Goe1 / Go1 / JCM 11833 / OCM 88) (Methanosarcina frisia)).